The sequence spans 341 residues: S-adenosylmethionine:tRNA ribosyltransferase-isomerase (341 aa).

Belongs to the QueA family. In terms of assembly, monomer.

It is found in the cytoplasm. It catalyses the reaction 7-aminomethyl-7-carbaguanosine(34) in tRNA + S-adenosyl-L-methionine = epoxyqueuosine(34) in tRNA + adenine + L-methionine + 2 H(+). The protein operates within tRNA modification; tRNA-queuosine biosynthesis. Its function is as follows. Transfers and isomerizes the ribose moiety from AdoMet to the 7-aminomethyl group of 7-deazaguanine (preQ1-tRNA) to give epoxyqueuosine (oQ-tRNA). In Acetivibrio thermocellus (strain ATCC 27405 / DSM 1237 / JCM 9322 / NBRC 103400 / NCIMB 10682 / NRRL B-4536 / VPI 7372) (Clostridium thermocellum), this protein is S-adenosylmethionine:tRNA ribosyltransferase-isomerase.